A 142-amino-acid polypeptide reads, in one-letter code: uncharacterized protein (142 aa).

A signal peptide spans 1–26; the sequence is MITEFIKSFLLFFFLPFFLSMPMIFA.

This is an uncharacterized protein from Schizosaccharomyces pombe (strain 972 / ATCC 24843) (Fission yeast).